Consider the following 128-residue polypeptide: NADPH-dependent 7-cyano-7-deazaguanine reductase (128 aa).

Cys-39 serves as the catalytic Thioimide intermediate. The Proton donor role is filled by Asp-46. Residues 61 to 63 (IEL) and 80 to 81 (HE) each bind substrate.

The protein belongs to the GTP cyclohydrolase I family. QueF type 1 subfamily.

The protein resides in the cytoplasm. The catalysed reaction is 7-aminomethyl-7-carbaguanine + 2 NADP(+) = 7-cyano-7-deazaguanine + 2 NADPH + 3 H(+). The protein operates within tRNA modification; tRNA-queuosine biosynthesis. Functionally, catalyzes the NADPH-dependent reduction of 7-cyano-7-deazaguanine (preQ0) to 7-aminomethyl-7-deazaguanine (preQ1). This is NADPH-dependent 7-cyano-7-deazaguanine reductase from Magnetococcus marinus (strain ATCC BAA-1437 / JCM 17883 / MC-1).